Reading from the N-terminus, the 306-residue chain is Beta-lactamase 1 (306 aa).

The first 43 residues, 1–43 (MKNKKMLKIGMCVGILGLSITSLVTFTGGALQVEAKEKTGQVK), serve as a signal peptide directing secretion. Catalysis depends on Ser-89, which acts as the Acyl-ester intermediate. Glu-185 functions as the Proton acceptor in the catalytic mechanism. Residue 251-253 (KSG) participates in substrate binding.

The protein belongs to the class-A beta-lactamase family.

The protein resides in the secreted. The catalysed reaction is a beta-lactam + H2O = a substituted beta-amino acid. Acts preferentially on penicillins. The chain is Beta-lactamase 1 (penPC) from Bacillus cereus.